The following is a 221-amino-acid chain: GTP cyclohydrolase III (221 aa).

Belongs to the archaeal-type GTP cyclohydrolase family.

The enzyme catalyses GTP + 3 H2O = 2-amino-5-formylamino-6-(5-phospho-D-ribosylamino)pyrimidin-4(3H)-one + 2 phosphate + 2 H(+). Catalyzes the formation of 2-amino-5-formylamino-6-ribofuranosylamino-4(3H)-pyrimidinone ribonucleotide monophosphate and inorganic phosphate from GTP. Also has an independent pyrophosphate phosphohydrolase activity. The sequence is that of GTP cyclohydrolase III from Pyrobaculum arsenaticum (strain DSM 13514 / JCM 11321 / PZ6).